We begin with the raw amino-acid sequence, 146 residues long: 3-dehydroquinate dehydratase (146 aa).

Tyrosine 22 (proton acceptor) is an active-site residue. Positions 73, 79, and 86 each coordinate substrate. The active-site Proton donor is the histidine 99. Substrate-binding positions include 100–101 (LS) and arginine 110.

The protein belongs to the type-II 3-dehydroquinase family. As to quaternary structure, homododecamer.

The enzyme catalyses 3-dehydroquinate = 3-dehydroshikimate + H2O. Its pathway is metabolic intermediate biosynthesis; chorismate biosynthesis; chorismate from D-erythrose 4-phosphate and phosphoenolpyruvate: step 3/7. In terms of biological role, catalyzes a trans-dehydration via an enolate intermediate. This is 3-dehydroquinate dehydratase from Synechococcus sp. (strain CC9605).